Here is a 519-residue protein sequence, read N- to C-terminus: Ribonuclease Y 1 (519 aa).

The chain crosses the membrane as a helical span at residues 3-23 (VPIVILAIIAIVVGVVGGYYL). Positions 92–120 (QREETLDRKDNSLEKRENSLNRRDKKLSA) are enriched in basic and acidic residues. Residues 92–124 (QREETLDRKDNSLEKRENSLNRRDKKLSAEEQN) form a disordered region. The KH domain maps to 209–272 (TITVVTLPND…EVAKIALEKL (64 aa)). Residues 335–428 (ALAHSIEVAK…VSTADIISAT (94 aa)) enclose the HD domain.

Belongs to the RNase Y family.

It is found in the cell membrane. Its function is as follows. Endoribonuclease that initiates mRNA decay. This Levilactobacillus brevis (strain ATCC 367 / BCRC 12310 / CIP 105137 / JCM 1170 / LMG 11437 / NCIMB 947 / NCTC 947) (Lactobacillus brevis) protein is Ribonuclease Y 1.